Here is a 541-residue protein sequence, read N- to C-terminus: Zinc finger protein 513 (541 aa).

The segment at 1 to 118 (MPRRKQSHPQ…GEARGERPGP (118 aa)) is disordered. The segment covering 44 to 57 (LEFEEEEEEEEGDG) has biased composition (acidic residues). Phosphoserine occurs at positions 85 and 96. Over residues 103 to 115 (EPARGPGEARGER) the composition is skewed to basic and acidic residues. 8 C2H2-type zinc fingers span residues 150 to 172 (YSCR…MQTH), 178 to 200 (FRCG…TRTH), 206 to 228 (YRCP…QRTH), 360 to 382 (FACS…MKTH), 388 to 410 (FRCA…QRVH), 416 to 438 (YKCP…GRIH), 444 to 466 (FRCS…MLRH), and 472 to 494 (FRCA…QKVH). Residues 492–541 (KVHGHGGAGGPGLSASEGWAPPHSPPSVLSSRGPPALGTAGSRAVHTDSS) form a disordered region.

Belongs to the krueppel C2H2-type zinc-finger protein family. In terms of assembly, binds DNA. Can associate with the proximal promoter regions of PAX6 and SP4, and their known targets including ARR3, RHO, OPN1MW2 and OPN1SW. In terms of tissue distribution, in the retina, expressed in the outer and inner nuclear layers, and the ganglion cell layer.

It localises to the nucleus. Its function is as follows. Transcriptional regulator that plays a role in retinal development and maintenance. This chain is Zinc finger protein 513 (ZNF513), found in Homo sapiens (Human).